A 1153-amino-acid chain; its full sequence is AP-3 complex subunit delta-1 (1153 aa).

A2 is subject to N-acetylalanine. HEAT repeat units follow at residues 34-71 (KYISQCIDEIKQELKQDNIAVKANAVCKLTYLQMLGYD), 77-114 (FNIIEVMSASKFTFKRIGYLAASQSFHEGTDVIMLTTN), 142-179 (DLARDLANDIMTLMSHTKPYIRKKAVLIMYKVFLKYPE), 180-216 (SLRPAFPRLKEKLEDPDPGVQSAAVNVICELARRNPK), 254-292 (RLGKKLIEPLTNLIHSTSAMSLLYECVNTVIAVLISLSS), 299-336 (ASIQLCVQKLRILIEDSDQNLKYLGLLAMSKILKTHPK), 338-373 (VQSHKDLILQCLDDKDESIRLRALDLLYGMVSKKNL), 375-409 (EIVKKLMTHVDKAEGTTYRDELLTKIIDICSQSNY), 431-468 (TRHGHLIAAQMLDVAIRVKAIRKFAVSQMSALLDSAHL), 497-535 (QEPHHTLEAMLRPRVTTLPGHIQAVYVQNVVKLYASILQ), and 548-585 (AVTQLMVDRLPQFVQSADLEVQERASCILQLVKHIQKL). Disordered stretches follow at residues 629–696 (EPLS…YQDT) and 726–920 (KLEE…PPES). A phosphoserine mark is found at S632, S634, S636, and S658. The segment covering 639–675 (ERPRAVFHEEEQRRPKHRPSEADEEELARRREARKQE) has biased composition (basic and acidic residues). Positions 659-679 (EADEEELARRREARKQEQANN) form a coiled coil. S688 bears the Phosphoserine mark. A coiled-coil region spans residues 725–756 (VKLEEERRHRQKLEKDKRRKKRKEKEKKGKRR). Basic and acidic residues predominate over residues 726–740 (KLEEERRHRQKLEKD). The span at 741 to 758 (KRRKKRKEKEKKGKRRHS) shows a compositional bias: basic residues. Phosphoserine occurs at positions 758 and 759. Phosphothreonine is present on T762. Phosphoserine occurs at positions 764, 785, 788, 828, and 829. Residues 777–794 (VTEEMPENALPSDEDDKD) show a composition bias toward acidic residues. A compositionally biased stretch (basic and acidic residues) spans 795–839 (PNDPYRALDIDLDKPLADSEKLPIQKHRNTETSKSPEKDVPMVEK). Composition is skewed to basic residues over residues 840-853 (KSKKPKKKEKKHKE) and 863-879 (EKEKKKSPKPKKKKHRK). Positions 845 to 869 (KKKEKKHKEKERDKEKKKEKEKKKS) form a coiled coil. Residue V931 is modified to Phosphoserine.

This sequence belongs to the adaptor complexes large subunit family. In terms of assembly, AP-3 associates with the BLOC-1 complex. Adaptor protein complex 3 (AP-3) is a heterotetramer composed of two large adaptins (delta-type subunit AP3D1 and beta-type subunit AP3B1 or AP3B2), a medium adaptin (mu-type subunit AP3M1 or AP3M2) and a small adaptin (sigma-type subunit APS1 or AP3S2). Interacts with SLC30A2. Interacts with CLN3 (via dileucine motif); this interaction facilitates lysosomal targeting. Present in all adult tissues examined with the highest levels in skeletal muscle, heart, pancreas and testis.

Its subcellular location is the cytoplasm. The protein resides in the golgi apparatus membrane. Functionally, part of the AP-3 complex, an adaptor-related complex which is not clathrin-associated. The complex is associated with the Golgi region as well as more peripheral structures. It facilitates the budding of vesicles from the Golgi membrane and may be directly involved in trafficking to lysosomes. Involved in process of CD8+ T-cell and NK cell degranulation. In concert with the BLOC-1 complex, AP-3 is required to target cargos into vesicles assembled at cell bodies for delivery into neurites and nerve terminals. The chain is AP-3 complex subunit delta-1 (AP3D1) from Homo sapiens (Human).